The primary structure comprises 311 residues: MTENNRLSVKLPGLDLKNPIIPASGCFGFGEEYAKYYDLNKLGSIMVKATTLHPRFGNPTPRVAETASGMLNAIGLQNPGLEVIMAEKLPWLNENFPDLPIIANVAGSEEDDYVAVCAKIGDAPNVKVIELNISCPNVKHGGQAFGTDPDVAAALVKACKAVSKVPLYVKLSPNVTDIVPIAKAVEAAGADGLTMINTLMGVRFDLKTRKPVLANITGGLSGPAIKPVALKLIHQVAQVVDIPIIGMGGVESAQDVLEMYMAGASAVAVGTANFADPFVCPKIIEKLPEVMDQYGIDSLENLIQEVKNSKK.

FMN is bound by residues Ser24 and 48-49 (KA). Substrate is bound by residues Lys48 and 72 to 76 (NAIGL). FMN-binding residues include Asn104 and Asn132. Asn132 contacts substrate. The active-site Nucleophile is Cys135. Positions 170 and 196 each coordinate FMN. 197-198 (NT) contacts substrate. Residues Gly222, 248–249 (GG), and 270–271 (GT) contribute to the FMN site.

The protein belongs to the dihydroorotate dehydrogenase family. Type 1 subfamily. Heterotetramer of 2 PyrK and 2 PyrD type B subunits. FMN is required as a cofactor.

The protein resides in the cytoplasm. It carries out the reaction (S)-dihydroorotate + NAD(+) = orotate + NADH + H(+). It participates in pyrimidine metabolism; UMP biosynthesis via de novo pathway; orotate from (S)-dihydroorotate (NAD(+) route): step 1/1. Its function is as follows. Catalyzes the conversion of dihydroorotate to orotate with NAD(+) as electron acceptor. The polypeptide is Dihydroorotate dehydrogenase B (NAD(+)), catalytic subunit (pyrDB) (Lactococcus lactis subsp. lactis (strain IL1403) (Streptococcus lactis)).